We begin with the raw amino-acid sequence, 246 residues long: 23S rRNA (guanosine-2'-O-)-methyltransferase RlmB (246 aa).

S-adenosyl-L-methionine is bound by residues Gly-197, Ile-217, and Leu-226.

This sequence belongs to the class IV-like SAM-binding methyltransferase superfamily. RNA methyltransferase TrmH family. RlmB subfamily.

Its subcellular location is the cytoplasm. It catalyses the reaction guanosine(2251) in 23S rRNA + S-adenosyl-L-methionine = 2'-O-methylguanosine(2251) in 23S rRNA + S-adenosyl-L-homocysteine + H(+). Its function is as follows. Specifically methylates the ribose of guanosine 2251 in 23S rRNA. In Haemophilus influenzae (strain ATCC 51907 / DSM 11121 / KW20 / Rd), this protein is 23S rRNA (guanosine-2'-O-)-methyltransferase RlmB.